Here is a 283-residue protein sequence, read N- to C-terminus: Thymidylate synthase (283 aa).

Position 22 (R22) interacts with dUMP. Catalysis depends on C160, which acts as the Nucleophile. Residues 180–183 (RSCD), N191, and 221–223 (HIY) contribute to the dUMP site. Residue D183 participates in (6R)-5,10-methylene-5,6,7,8-tetrahydrofolate binding. S282 is a (6R)-5,10-methylene-5,6,7,8-tetrahydrofolate binding site.

The protein belongs to the thymidylate synthase family. Bacterial-type ThyA subfamily. In terms of assembly, homodimer.

Its subcellular location is the cytoplasm. The enzyme catalyses dUMP + (6R)-5,10-methylene-5,6,7,8-tetrahydrofolate = 7,8-dihydrofolate + dTMP. It functions in the pathway pyrimidine metabolism; dTTP biosynthesis. Catalyzes the reductive methylation of 2'-deoxyuridine-5'-monophosphate (dUMP) to 2'-deoxythymidine-5'-monophosphate (dTMP) while utilizing 5,10-methylenetetrahydrofolate (mTHF) as the methyl donor and reductant in the reaction, yielding dihydrofolate (DHF) as a by-product. This enzymatic reaction provides an intracellular de novo source of dTMP, an essential precursor for DNA biosynthesis. In Shewanella loihica (strain ATCC BAA-1088 / PV-4), this protein is Thymidylate synthase.